Here is a 146-residue protein sequence, read N- to C-terminus: Probable trivalent organoarsenical cleaving enzyme (146 aa).

Residues 2–118 (KYVHVGVNVV…DGNEWEFFYT (117 aa)) form the VOC domain. Residues His5 and His62 each coordinate Fe(2+). The roxarsone (III) site is built by Cys95 and Cys96. Residue Glu114 coordinates Fe(2+).

The protein to M.tuberculosis Rv2641. The cofactor is Fe(2+).

It catalyses the reaction methylarsonous acid + AH2 + O2 = arsenite + methanol + A + H(+). The enzyme catalyses roxarsone (III) + AH2 + O2 = 4-hydroxy-3-nitrocyclohexa-2,5-dien-1-one + arsenite + A + H(+). The catalysed reaction is nitarsone (III) + AH2 + O2 = 4-nitrocyclohexa-2,5-dien-1-one + arsenite + A + H(+). It carries out the reaction 4-aminophenylarsonous acid + AH2 + O2 = 4-aminocyclohexa-2,5-dien-1-one + arsenite + A. Functionally, nonheme iron-dependent dioxygenase that can break carbon-arsenic bonds, playing a role in the detoxification of environmental organoarsenical compounds. Catalyzes the oxygen-dependent demethylation of highly toxic methylarsonous acid (MAs(III)) to arsenite, which can then be exported out of the cell. Can also cleave the C-As bond in several trivalent aromatic arsenicals, including roxarsone (III), nitarsone (III) and (4-aminophenyl)arsonous acid. Organoarsenical degradation by this enzyme is proposed to have a significant impact on the arsenic biogeocycle that maintains a balance between organic and inorganic species. The polypeptide is Probable trivalent organoarsenical cleaving enzyme (yqcK) (Bacillus subtilis (strain 168)).